Reading from the N-terminus, the 178-residue chain is MSRIGKKPVVIPSGVTISVAAGNKVEVKGAKATLSKTFSTDVTFSVADNVATITPNNNSKNAIAQSGTARAILSNMVEGVSKGFERKLKIIGVGYRAKAQGNELNLTLGFSHPVVYKLPQGITAETPAPTEIILKGADKELLGKVASEIREYRKPEPYKGKGVRYEDEYVAKKEAKKK.

The protein belongs to the universal ribosomal protein uL6 family. In terms of assembly, part of the 50S ribosomal subunit.

In terms of biological role, this protein binds to the 23S rRNA, and is important in its secondary structure. It is located near the subunit interface in the base of the L7/L12 stalk, and near the tRNA binding site of the peptidyltransferase center. The protein is Large ribosomal subunit protein uL6 of Francisella tularensis subsp. novicida (strain U112).